The primary structure comprises 456 residues: Bifunctional protein GlmU (456 aa).

The pyrophosphorylase stretch occupies residues 1–228 (MPQNTLNTVI…SHLAAGVNNK (228 aa)). UDP-N-acetyl-alpha-D-glucosamine contacts are provided by residues 11-14 (LAAG), K25, Q75, 80-81 (GT), 102-104 (YGD), G138, E153, N168, and N226. D104 is a Mg(2+) binding site. A Mg(2+)-binding site is contributed by N226. Residues 229 to 249 (RQLAELERIFQTEQAQELLKA) are linker. The tract at residues 250–456 (GVTLRDPARF…GWVRPEKNKQ (207 aa)) is N-acetyltransferase. Residues R332 and K350 each coordinate UDP-N-acetyl-alpha-D-glucosamine. H362 serves as the catalytic Proton acceptor. Residues Y365 and N376 each coordinate UDP-N-acetyl-alpha-D-glucosamine. Acetyl-CoA contacts are provided by residues A379, 385–386 (NY), S404, A422, and R439.

The protein in the N-terminal section; belongs to the N-acetylglucosamine-1-phosphate uridyltransferase family. This sequence in the C-terminal section; belongs to the transferase hexapeptide repeat family. In terms of assembly, homotrimer. It depends on Mg(2+) as a cofactor.

It is found in the cytoplasm. It carries out the reaction alpha-D-glucosamine 1-phosphate + acetyl-CoA = N-acetyl-alpha-D-glucosamine 1-phosphate + CoA + H(+). It catalyses the reaction N-acetyl-alpha-D-glucosamine 1-phosphate + UTP + H(+) = UDP-N-acetyl-alpha-D-glucosamine + diphosphate. It participates in nucleotide-sugar biosynthesis; UDP-N-acetyl-alpha-D-glucosamine biosynthesis; N-acetyl-alpha-D-glucosamine 1-phosphate from alpha-D-glucosamine 6-phosphate (route II): step 2/2. Its pathway is nucleotide-sugar biosynthesis; UDP-N-acetyl-alpha-D-glucosamine biosynthesis; UDP-N-acetyl-alpha-D-glucosamine from N-acetyl-alpha-D-glucosamine 1-phosphate: step 1/1. The protein operates within bacterial outer membrane biogenesis; LPS lipid A biosynthesis. Functionally, catalyzes the last two sequential reactions in the de novo biosynthetic pathway for UDP-N-acetylglucosamine (UDP-GlcNAc). The C-terminal domain catalyzes the transfer of acetyl group from acetyl coenzyme A to glucosamine-1-phosphate (GlcN-1-P) to produce N-acetylglucosamine-1-phosphate (GlcNAc-1-P), which is converted into UDP-GlcNAc by the transfer of uridine 5-monophosphate (from uridine 5-triphosphate), a reaction catalyzed by the N-terminal domain. The chain is Bifunctional protein GlmU from Neisseria gonorrhoeae.